The chain runs to 133 residues: UPF0102 protein AB57_1130 (133 aa).

It belongs to the UPF0102 family.

The chain is UPF0102 protein AB57_1130 from Acinetobacter baumannii (strain AB0057).